The sequence spans 166 residues: uncharacterized protein (166 aa).

It to B.subtilis YpjQ.

This is an uncharacterized protein from Bacillus subtilis (strain 168).